The sequence spans 321 residues: Olfactory receptor 14J1 (321 aa).

The Extracellular segment spans residues 1–23 (MVNLTSMSGFLLMGFSDERKLQI). The N-linked (GlcNAc...) asparagine glycan is linked to Asn-3. The helical transmembrane segment at 24-44 (LHALVFLVTYLLALTGNLLII) threads the bilayer. The Cytoplasmic segment spans residues 45–52 (TIITVDRR). The helical transmembrane segment at 53–73 (LHSPMYYFLKHLSLLDLCFIS) threads the bilayer. Residues 74-97 (VTVPQSIANSLMGNGYISLVQCIL) lie on the Extracellular side of the membrane. Cys-95 and Cys-187 are oxidised to a cystine. A helical membrane pass occupies residues 98 to 118 (QVFFFIALASSEVAILTVMSY). The Cytoplasmic portion of the chain corresponds to 119-137 (DRYAAICQPLHYETIMDPR). Residues 138-158 (ACRHAVIAVWIAGGLSGLMHA) traverse the membrane as a helical segment. The Extracellular segment spans residues 159–194 (AINFSIPLCGKRVIHQFFCDVPQMLKLACSYEFINE). The chain crosses the membrane as a helical span at residues 195–215 (IALAAFTTSAAFICLISIVLS). The Cytoplasmic segment spans residues 216-235 (YIRIFSTVLRIPSAEGRTKV). A helical membrane pass occupies residues 236–256 (FSTCLPHLFVATFFLSAAGFE). The Extracellular portion of the chain corresponds to 257–269 (FLRLPSDSSSTVD). The chain crosses the membrane as a helical span at residues 270 to 290 (LVFSVFYTVIPPTLNPVIYSL). Topologically, residues 291–321 (RNDSMKAALRKMLSKEELPQRKMCLKAMFKL) are cytoplasmic.

Belongs to the G-protein coupled receptor 1 family.

The protein localises to the cell membrane. Its function is as follows. Odorant receptor. This is Olfactory receptor 14J1 (OR14J1) from Homo sapiens (Human).